The primary structure comprises 33 residues: Cytochrome b6-f complex subunit 6 (33 aa).

Residues 4 to 24 (ITIISYFGFLLASIIFTLVLF) form a helical membrane-spanning segment.

It belongs to the PetL family. In terms of assembly, the 4 large subunits of the cytochrome b6-f complex are cytochrome b6, subunit IV (17 kDa polypeptide, PetD), cytochrome f and the Rieske protein, while the 4 small subunits are PetG, PetL, PetM and PetN. The complex functions as a dimer.

It is found in the plastid. The protein localises to the chloroplast thylakoid membrane. In terms of biological role, component of the cytochrome b6-f complex, which mediates electron transfer between photosystem II (PSII) and photosystem I (PSI), cyclic electron flow around PSI, and state transitions. PetL is important for photoautotrophic growth as well as for electron transfer efficiency and stability of the cytochrome b6-f complex. The protein is Cytochrome b6-f complex subunit 6 of Pinus thunbergii (Japanese black pine).